A 264-amino-acid polypeptide reads, in one-letter code: Thiazole synthase (264 aa).

The active-site Schiff-base intermediate with DXP is the Lys-106. Residues Gly-167, Ala-193–Gly-194, and Asn-215–Ser-216 each bind 1-deoxy-D-xylulose 5-phosphate.

It belongs to the ThiG family. As to quaternary structure, homotetramer. Forms heterodimers with either ThiH or ThiS.

It is found in the cytoplasm. It carries out the reaction [ThiS sulfur-carrier protein]-C-terminal-Gly-aminoethanethioate + 2-iminoacetate + 1-deoxy-D-xylulose 5-phosphate = [ThiS sulfur-carrier protein]-C-terminal Gly-Gly + 2-[(2R,5Z)-2-carboxy-4-methylthiazol-5(2H)-ylidene]ethyl phosphate + 2 H2O + H(+). It functions in the pathway cofactor biosynthesis; thiamine diphosphate biosynthesis. Its function is as follows. Catalyzes the rearrangement of 1-deoxy-D-xylulose 5-phosphate (DXP) to produce the thiazole phosphate moiety of thiamine. Sulfur is provided by the thiocarboxylate moiety of the carrier protein ThiS. In vitro, sulfur can be provided by H(2)S. The polypeptide is Thiazole synthase (Stutzerimonas stutzeri (strain A1501) (Pseudomonas stutzeri)).